The primary structure comprises 142 residues: Large ribosomal subunit protein bL17 (142 aa).

It belongs to the bacterial ribosomal protein bL17 family. In terms of assembly, part of the 50S ribosomal subunit. Contacts protein L32.

This is Large ribosomal subunit protein bL17 from Brucella canis (strain ATCC 23365 / NCTC 10854 / RM-666).